The primary structure comprises 121 residues: Ribonuclease P protein component (121 aa).

The protein belongs to the RnpA family. As to quaternary structure, consists of a catalytic RNA component (M1 or rnpB) and a protein subunit.

It carries out the reaction Endonucleolytic cleavage of RNA, removing 5'-extranucleotides from tRNA precursor.. Functionally, RNaseP catalyzes the removal of the 5'-leader sequence from pre-tRNA to produce the mature 5'-terminus. It can also cleave other RNA substrates such as 4.5S RNA. The protein component plays an auxiliary but essential role in vivo by binding to the 5'-leader sequence and broadening the substrate specificity of the ribozyme. This chain is Ribonuclease P protein component, found in Alcanivorax borkumensis (strain ATCC 700651 / DSM 11573 / NCIMB 13689 / SK2).